A 118-amino-acid polypeptide reads, in one-letter code: RxLR effector protein PITG_19617 (118 aa).

The signal sequence occupies residues 1 to 21 (MRAVYILAMACAATLQASSSA). The RxLR-dEER motif lies at 50–64 (RLLRVEDKEEETEEE).

The protein belongs to the RxLR effector family.

Its subcellular location is the secreted. The protein resides in the host nucleus. It is found in the host cytoplasm. In terms of biological role, effector that enhances P.infestans colonization of Nicotiana benthamiana leaves. The protein is RxLR effector protein PITG_19617 of Phytophthora infestans (strain T30-4) (Potato late blight agent).